The primary structure comprises 403 residues: S-adenosylmethionine synthase (403 aa).

H17 contributes to the ATP binding site. Mg(2+) is bound at residue D19. E45 is a binding site for K(+). The L-methionine site is built by E58 and Q104. Positions 104 to 114 (QSPDIAQGVDT) are flexible loop. ATP contacts are provided by residues 179–181 (DGK), 250–251 (KF), D259, 265–266 (RK), A282, and K286. L-methionine is bound at residue D259. L-methionine is bound at residue K290.

The protein belongs to the AdoMet synthase family. In terms of assembly, homotetramer; dimer of dimers. The cofactor is Mg(2+). K(+) serves as cofactor.

The protein resides in the cytoplasm. The enzyme catalyses L-methionine + ATP + H2O = S-adenosyl-L-methionine + phosphate + diphosphate. The protein operates within amino-acid biosynthesis; S-adenosyl-L-methionine biosynthesis; S-adenosyl-L-methionine from L-methionine: step 1/1. In terms of biological role, catalyzes the formation of S-adenosylmethionine (AdoMet) from methionine and ATP. The overall synthetic reaction is composed of two sequential steps, AdoMet formation and the subsequent tripolyphosphate hydrolysis which occurs prior to release of AdoMet from the enzyme. This chain is S-adenosylmethionine synthase, found in Mycobacterium tuberculosis (strain ATCC 25177 / H37Ra).